Here is a 200-residue protein sequence, read N- to C-terminus: 3-isopropylmalate dehydratase small subunit (200 aa).

It belongs to the LeuD family. LeuD type 1 subfamily. Heterodimer of LeuC and LeuD.

It catalyses the reaction (2R,3S)-3-isopropylmalate = (2S)-2-isopropylmalate. It participates in amino-acid biosynthesis; L-leucine biosynthesis; L-leucine from 3-methyl-2-oxobutanoate: step 2/4. Functionally, catalyzes the isomerization between 2-isopropylmalate and 3-isopropylmalate, via the formation of 2-isopropylmaleate. In Actinobacillus pleuropneumoniae serotype 5b (strain L20), this protein is 3-isopropylmalate dehydratase small subunit.